A 240-amino-acid polypeptide reads, in one-letter code: tRNA pseudouridine synthase A (240 aa).

The active-site Nucleophile is the D52. Y110 serves as a coordination point for substrate.

It belongs to the tRNA pseudouridine synthase TruA family. As to quaternary structure, homodimer.

The enzyme catalyses uridine(38/39/40) in tRNA = pseudouridine(38/39/40) in tRNA. Formation of pseudouridine at positions 38, 39 and 40 in the anticodon stem and loop of transfer RNAs. The chain is tRNA pseudouridine synthase A from Solibacter usitatus (strain Ellin6076).